We begin with the raw amino-acid sequence, 642 residues long: Myrosinase-binding protein 2 (642 aa).

4 Jacalin-type lectin domains span residues 2–151 (SEKV…HFFA), 156–291 (LKHF…HFAP), 334–477 (PNKV…YFAP), and 490–633 (SKKL…HAVP). Pro residues predominate over residues 296 to 334 (TPAPAPAPAPAPAPAPSPAPASAPVPAPAPTPAPAPAPP). 2 disordered regions span residues 296-338 (TPAP…NKVE) and 479-499 (TNST…RGGN). The span at 479–490 (TNSTTPSTPSTS) shows a compositional bias: low complexity.

It belongs to the jacalin lectin family. As to expression, expressed in flowers. Detected mainly in ovules and styles of immature flowers, but also in pistils, styles, stamens, petals and embryos. Not detected in leaves.

This chain is Myrosinase-binding protein 2 (F-ATMBP), found in Arabidopsis thaliana (Mouse-ear cress).